The chain runs to 382 residues: Transcription termination/antitermination protein NusA (382 aa).

The 65-residue stretch at 135–199 folds into the S1 motif domain; the sequence is EDIMTGIVQR…KGPQIMISRT (65 aa). Residues 301-367 form the KH domain; it reads EKTTQVIVPD…TLALDQETAD (67 aa). A disordered region spans residues 348–382; sequence LLEDEAASHETLALDQETADQPEATVETSKNHEEE.

Belongs to the NusA family. As to quaternary structure, monomer. Binds directly to the core enzyme of the DNA-dependent RNA polymerase and to nascent RNA.

The protein localises to the cytoplasm. Participates in both transcription termination and antitermination. The protein is Transcription termination/antitermination protein NusA of Halalkalibacterium halodurans (strain ATCC BAA-125 / DSM 18197 / FERM 7344 / JCM 9153 / C-125) (Bacillus halodurans).